Reading from the N-terminus, the 265-residue chain is Small ribosomal subunit protein uS2 (265 aa).

This sequence belongs to the universal ribosomal protein uS2 family.

The sequence is that of Small ribosomal subunit protein uS2 from Ligilactobacillus salivarius (strain UCC118) (Lactobacillus salivarius).